Reading from the N-terminus, the 793-residue chain is Probable exo-1,4-beta-xylosidase xlnD (793 aa).

The signal sequence occupies residues 1-20; that stretch reads MPRVASVAAVLAALLPSALG. N-linked (GlcNAc...) asparagine glycosylation is found at Asn-23, Asn-87, and Asn-142. Asp-310 is an active-site residue. 11 N-linked (GlcNAc...) asparagine glycosylation sites follow: Asn-326, Asn-385, Asn-404, Asn-440, Asn-477, Asn-518, Asn-559, Asn-614, Asn-652, Asn-679, and Asn-701.

This sequence belongs to the glycosyl hydrolase 3 family.

The protein localises to the secreted. The catalysed reaction is Hydrolysis of (1-&gt;4)-beta-D-xylans, to remove successive D-xylose residues from the non-reducing termini.. The protein operates within glycan degradation; xylan degradation. Functionally, xylan 1,4-beta-xylosidase involved in the hydrolysis of xylan, a major structural heterogeneous polysaccharide found in plant biomass representing the second most abundant polysaccharide in the biosphere, after cellulose. The sequence is that of Probable exo-1,4-beta-xylosidase xlnD (xlnD) from Aspergillus terreus (strain NIH 2624 / FGSC A1156).